A 297-amino-acid chain; its full sequence is Ribosomal RNA small subunit methyltransferase A (297 aa).

S-adenosyl-L-methionine contacts are provided by Asn-28, Leu-30, Gly-55, Glu-76, Asp-101, and Asn-126.

Belongs to the class I-like SAM-binding methyltransferase superfamily. rRNA adenine N(6)-methyltransferase family. RsmA subfamily.

The protein resides in the cytoplasm. It carries out the reaction adenosine(1518)/adenosine(1519) in 16S rRNA + 4 S-adenosyl-L-methionine = N(6)-dimethyladenosine(1518)/N(6)-dimethyladenosine(1519) in 16S rRNA + 4 S-adenosyl-L-homocysteine + 4 H(+). Its function is as follows. Specifically dimethylates two adjacent adenosines (A1518 and A1519) in the loop of a conserved hairpin near the 3'-end of 16S rRNA in the 30S particle. May play a critical role in biogenesis of 30S subunits. The chain is Ribosomal RNA small subunit methyltransferase A from Latilactobacillus sakei subsp. sakei (strain 23K) (Lactobacillus sakei subsp. sakei).